The sequence spans 301 residues: Retinochrome (301 aa).

The Extracellular segment spans residues 1–17; the sequence is MFGNPAMTGLHQFTMWE. Residues 18-43 traverse the membrane as a helical segment; that stretch reads HYFTGSIYLVLGCVVFSLCGMCIIFL. Over 44-54 the chain is Cytoplasmic; sequence ARQSPKPRRKY. The chain crosses the membrane as a helical span at residues 55-76; it reads AILIHVLITAMAVNGGDPAHAS. Over 77-94 the chain is Extracellular; sequence SSIVGRWLYGSVGCQLMG. Residues 95-120 form a helical membrane-spanning segment; the sequence is FWGFFGGMSHIWMLFAFAMERYMAVC. Topologically, residues 121–132 are cytoplasmic; it reads HREFYQQMPSVY. The chain crosses the membrane as a helical span at residues 133–153; that stretch reads YSIIVGLMYTFGTFWATMPLL. Residues 154-180 lie on the Extracellular side of the membrane; the sequence is GWASYGLEVHGTSCTINYSVSDESYQS. N-linked (GlcNAc...) asparagine glycosylation is present at N170. The helical transmembrane segment at 181–208 threads the bilayer; sequence YVFFLAIFSFIFPMVSGWYAISKAWSGL. Over 209–230 the chain is Cytoplasmic; it reads SAIPDAEKEKDKDILSEEQLTA. A helical membrane pass occupies residues 231-255; it reads LAGAFILISLISWSGFGYVAIYSAL. The Extracellular segment spans residues 256 to 264; it reads THGGAQLSH. A helical membrane pass occupies residues 265–289; that stretch reads LRGHVPPIMSKTGCALFPLLIFLLT. K275 is modified (N6-(retinylidene)lysine). The Cytoplasmic portion of the chain corresponds to 290–301; the sequence is ARSLPKSDTKKP.

The protein belongs to the G-protein coupled receptor 1 family. Opsin subfamily. In terms of tissue distribution, mainly stored in myeloid bodies of the inner segments.

It localises to the membrane. Its function is as follows. Retinochrome is capable of acting as an effective catalyst in the light to convert various isomers of retinal into 11-cis, the form that is required by opsin to resynthesize rhodopsin. This chain is Retinochrome, found in Todarodes pacificus (Japanese flying squid).